Reading from the N-terminus, the 265-residue chain is Probable U2 small nuclear ribonucleoprotein A' (265 aa).

4 LRR repeats span residues 20–41 (RERE…GATL), 43–64 (QFDT…PHLP), 65–86 (RLKC…LEEA), and 89–110 (NLGS…EPLV). In terms of domain architecture, LRRCT spans 123–161 (NPVSTKPNYREYMAYKFPQLRLLDFRKIKQKDRQAAQEF).

This sequence belongs to the U2 small nuclear ribonucleoprotein A family. In terms of assembly, interacts with the SMN complex.

The protein resides in the nucleus. In terms of biological role, involved in pre-mRNA splicing as component of the spliceosome. Associated with sn-RNP U2, where it contributes to the binding of stem loop IV of U2 snRNA. In the germ line, has a role in oogenesis, by regulating spermatogenesis and nurse cell nuclei chromatin decondensation and dispersal, probably by regulating the splicing of proteins necessary for germline differentiation such as the meiotic protein mei-P26. The protein is Probable U2 small nuclear ribonucleoprotein A' (U2A) of Drosophila melanogaster (Fruit fly).